Consider the following 213-residue polypeptide: MRQGFPYARPGQVIGLFGGSFDPPHAGHVHVTREALKMFGLDRVWWLVTPGNPLKAHGPAPLDRRMEAARAMMRHPRVDVTDIEAHLGTRVTADTIAALRRIYPRVRFVWLMGADNLAQLHRWKDWRQIIETVPVGVLARPGDRISARMSPAARAYAPYRIDGQARHLLGRAEAPAWCFVNVPMVDVSSTRIRAAGGWSAAQQGRGQTGTQDQ.

It belongs to the NadD family.

It carries out the reaction nicotinate beta-D-ribonucleotide + ATP + H(+) = deamido-NAD(+) + diphosphate. It functions in the pathway cofactor biosynthesis; NAD(+) biosynthesis; deamido-NAD(+) from nicotinate D-ribonucleotide: step 1/1. In terms of biological role, catalyzes the reversible adenylation of nicotinate mononucleotide (NaMN) to nicotinic acid adenine dinucleotide (NaAD). In Ruegeria pomeroyi (strain ATCC 700808 / DSM 15171 / DSS-3) (Silicibacter pomeroyi), this protein is Probable nicotinate-nucleotide adenylyltransferase.